The sequence spans 342 residues: MGSMDDVTAYPRLVGDVGGTNARFALEMAPMRLAHIGVLAGDDYPSLEAAMRAYLAALPPEIAAAGVRHAAIGIANPVLGDQIRMTNRDWAFSTEAMRQSLGFDTFVVLNDFAALAHALPYLGADELEQVGGSTCVADAPRALLGPGTGLGVASLLPTQAGRFIAVAGEGGHVAFAPMNDEEVVIWRFARERFGHVSAERLISGMGLELIYEALGACFDLWQQGPAVRRAADITAIALGEMEDTAGDHARCRYAVDTFCAMLGTVAANLAVTLGARGGVYIGGGIVPRLGAAFANSPFRRRFEDKGRFSGYVAAMPVYVIHAPYPGLIGLCAAMDHAVASGH.

Position 15-20 (15-20 (GDVGGT)) interacts with ATP.

The protein belongs to the bacterial glucokinase family.

The protein resides in the cytoplasm. The enzyme catalyses D-glucose + ATP = D-glucose 6-phosphate + ADP + H(+). This Ralstonia nicotianae (strain ATCC BAA-1114 / GMI1000) (Ralstonia solanacearum) protein is Glucokinase.